Here is a 244-residue protein sequence, read N- to C-terminus: Cobalt transport protein CbiM (244 aa).

An N-terminal signal peptide occupies residues 1-28 (MKLLKNKKVTFVALLAILAVLSTQSVSA). The next 6 helical transmembrane spans lie at 36–56 (LPLF…VVGL), 71–91 (TMLA…IPSV), 108–128 (FGPS…ALLL), 135–155 (TLGA…YFVY), 166–186 (PVSI…TTSI), and 208–228 (GVFL…TVVL).

This sequence belongs to the CbiM family. As to quaternary structure, forms an energy-coupling factor (ECF) transporter complex composed of an ATP-binding protein (A component, CbiO), a transmembrane protein (T component, CbiQ) and 2 possible substrate-capture proteins (S components, CbiM and CbiN) of unknown stoichimetry.

Its subcellular location is the cell membrane. It participates in cofactor biosynthesis; adenosylcobalamin biosynthesis. Its function is as follows. Part of the energy-coupling factor (ECF) transporter complex CbiMNOQ involved in cobalt import. This chain is Cobalt transport protein CbiM, found in Streptococcus sanguinis (strain SK36).